The sequence spans 265 residues: Thiazole synthase (265 aa).

Residue K106 is the Schiff-base intermediate with DXP of the active site. Residues G167, 193–194 (AG), and 215–216 (NT) each bind 1-deoxy-D-xylulose 5-phosphate. The segment at 245–265 (GRIPRRARAEPSSPQLGLVGS) is disordered.

This sequence belongs to the ThiG family. In terms of assembly, homotetramer. Forms heterodimers with either ThiH or ThiS.

The protein resides in the cytoplasm. It carries out the reaction [ThiS sulfur-carrier protein]-C-terminal-Gly-aminoethanethioate + 2-iminoacetate + 1-deoxy-D-xylulose 5-phosphate = [ThiS sulfur-carrier protein]-C-terminal Gly-Gly + 2-[(2R,5Z)-2-carboxy-4-methylthiazol-5(2H)-ylidene]ethyl phosphate + 2 H2O + H(+). It participates in cofactor biosynthesis; thiamine diphosphate biosynthesis. Catalyzes the rearrangement of 1-deoxy-D-xylulose 5-phosphate (DXP) to produce the thiazole phosphate moiety of thiamine. Sulfur is provided by the thiocarboxylate moiety of the carrier protein ThiS. In vitro, sulfur can be provided by H(2)S. The protein is Thiazole synthase of Methylobacterium sp. (strain 4-46).